A 304-amino-acid polypeptide reads, in one-letter code: Dihydroorotate dehydrogenase B (NAD(+)), catalytic subunit (304 aa).

FMN contacts are provided by residues Ser-22 and 46–47 (KG). Substrate is bound by residues Lys-46 and 70-74 (NAIGL). The FMN site is built by Asn-100 and Asn-128. Asn-128 is a substrate binding site. Catalysis depends on Cys-131, which acts as the Nucleophile. Positions 166 and 192 each coordinate FMN. 193–194 (NT) is a substrate binding site. Residues Gly-218, 244–245 (GG), and 266–267 (GT) each bind FMN.

Belongs to the dihydroorotate dehydrogenase family. Type 1 subfamily. In terms of assembly, heterotetramer of 2 PyrK and 2 PyrD type B subunits. FMN serves as cofactor.

Its subcellular location is the cytoplasm. The enzyme catalyses (S)-dihydroorotate + NAD(+) = orotate + NADH + H(+). It participates in pyrimidine metabolism; UMP biosynthesis via de novo pathway; orotate from (S)-dihydroorotate (NAD(+) route): step 1/1. Its function is as follows. Catalyzes the conversion of dihydroorotate to orotate with NAD(+) as electron acceptor. The chain is Dihydroorotate dehydrogenase B (NAD(+)), catalytic subunit (pyrD) from Pelobacter propionicus (strain DSM 2379 / NBRC 103807 / OttBd1).